A 506-amino-acid chain; its full sequence is AMP phosphorylase (506 aa).

AMP is bound by residues G167, 193-198 (SRAITG), and T202. D255 acts as the Proton donor in catalysis. Positions 263 and 287 each coordinate AMP.

This sequence belongs to the thymidine/pyrimidine-nucleoside phosphorylase family. Type 2 subfamily.

The catalysed reaction is AMP + phosphate = alpha-D-ribose 1,5-bisphosphate + adenine. It carries out the reaction CMP + phosphate = cytosine + alpha-D-ribose 1,5-bisphosphate. It catalyses the reaction UMP + phosphate = alpha-D-ribose 1,5-bisphosphate + uracil. Its function is as follows. Catalyzes the conversion of AMP and phosphate to adenine and ribose 1,5-bisphosphate (R15P). Exhibits phosphorylase activity toward CMP and UMP in addition to AMP. Functions in an archaeal AMP degradation pathway, together with R15P isomerase and RubisCO. The polypeptide is AMP phosphorylase (Methanosarcina barkeri (strain Fusaro / DSM 804)).